Consider the following 420-residue polypeptide: MVEKRTQPLARDAMAYVLAGGRGSRLKELTDRRAKPAVYFGGKARIIDFALSNALNSGIRRIGVATQYKAHSLIRHLQRGWNFFRPERNESFDILPASQRVSETQWYEGTADAVYQNIDIIEDHGVEYMVILAGDHVYKMDYELMLQQHVDSGADVTVGCLEVPRMEATGFGVMHVDNADRIIAFVEKPADPPGIPGNPDMALASMGIYVFHTKFLMDMLRRDAADPKSSRDFGKDIIPYIVEHGKAVAHRFTHSCVRSDFEREAYWRDVGTIDAYWQANIDLTHITPELDIYDSTWPIWTFSEIKPPAKFVHDDENRRGSATSSLVSGDCIISGAALNRSLLFTGVRVNSYSRLENAVVLPDVTIGRHSILRNVVIDSRVVIPEGLVVGDDPELDAKRFRRTESGVCLITQTMIDKLGM.

Residues Tyr-107, Gly-172, 187–188 (EK), and Ser-205 each bind alpha-D-glucose 1-phosphate.

This sequence belongs to the bacterial/plant glucose-1-phosphate adenylyltransferase family. In terms of assembly, homotetramer.

The catalysed reaction is alpha-D-glucose 1-phosphate + ATP + H(+) = ADP-alpha-D-glucose + diphosphate. It participates in glycan biosynthesis; glycogen biosynthesis. In terms of biological role, involved in the biosynthesis of ADP-glucose, a building block required for the elongation reactions to produce glycogen. Catalyzes the reaction between ATP and alpha-D-glucose 1-phosphate (G1P) to produce pyrophosphate and ADP-Glc. This Rhizobium meliloti (strain 1021) (Ensifer meliloti) protein is Glucose-1-phosphate adenylyltransferase.